Reading from the N-terminus, the 444-residue chain is Tubulin beta-8 chain (444 aa).

The short motif at 1 to 4 (MREI) is the MREI motif element. The GTP site is built by Q11, E69, S138, G142, T143, and G144. E69 is a binding site for Mg(2+). At S172 the chain carries Phosphoserine; by CDK1. Residues N204 and N226 each contribute to the GTP site. Position 436 is a 5-glutamyl polyglutamate (E436).

The protein belongs to the tubulin family. Dimer of alpha and beta chains. A typical microtubule is a hollow water-filled tube with an outer diameter of 25 nm and an inner diameter of 15 nM. Alpha-beta heterodimers associate head-to-tail to form protofilaments running lengthwise along the microtubule wall with the beta-tubulin subunit facing the microtubule plus end conferring a structural polarity. Microtubules usually have 13 protofilaments but different protofilament numbers can be found in some organisms and specialized cells. The cofactor is Mg(2+). In terms of processing, some glutamate residues at the C-terminus are polyglycylated, resulting in polyglycine chains on the gamma-carboxyl group. Glycylation is mainly limited to tubulin incorporated into axonemes (cilia and flagella) whereas glutamylation is prevalent in neuronal cells, centrioles, axonemes, and the mitotic spindle. Both modifications can coexist on the same protein on adjacent residues, and lowering polyglycylation levels increases polyglutamylation, and reciprocally. Cilia and flagella glycylation is required for their stability and maintenance. Flagella glycylation controls sperm motility. Post-translationally, some glutamate residues at the C-terminus are polyglutamylated, resulting in polyglutamate chains on the gamma-carboxyl group. Polyglutamylation plays a key role in microtubule severing by spastin (SPAST). SPAST preferentially recognizes and acts on microtubules decorated with short polyglutamate tails: severing activity by SPAST increases as the number of glutamates per tubulin rises from one to eight, but decreases beyond this glutamylation threshold. Glutamylation is also involved in cilia motility. Phosphorylated on Ser-172 by CDK1 during the cell cycle, from metaphase to telophase, but not in interphase. This phosphorylation inhibits tubulin incorporation into microtubules.

The protein localises to the cytoplasm. It is found in the cytoskeleton. It localises to the spindle. Functionally, tubulin is the major constituent of microtubules, a cylinder consisting of laterally associated linear protofilaments composed of alpha- and beta-tubulin heterodimers. Microtubules grow by the addition of GTP-tubulin dimers to the microtubule end, where a stabilizing cap forms. Below the cap, tubulin dimers are in GDP-bound state, owing to GTPase activity of alpha-tubulin. Has a key role in meiotic spindle assembly and oocyte maturation. The polypeptide is Tubulin beta-8 chain (TUBB8) (Papio hamadryas (Hamadryas baboon)).